The chain runs to 300 residues: Very-long-chain enoyl-CoA reductase (300 aa).

The chain crosses the membrane as a helical span at residues 91–111; it reads SLVFICEYAGPLFVYPIFYFL. N-linked (GlcNAc...) asparagine glycosylation occurs at asparagine 163. Residues 191–211 traverse the membrane as a helical segment; sequence VYLGLGLWIIGEVFNYICHIQ. The N-linked (GlcNAc...) asparagine glycan is linked to asparagine 238. A helical transmembrane segment spans residues 243–263; it reads ILSWIGFSILTQTLTSWIFAL.

It belongs to the steroid 5-alpha reductase family.

Its subcellular location is the endoplasmic reticulum membrane. It carries out the reaction a very-long-chain 2,3-saturated fatty acyl-CoA + NADP(+) = a very-long-chain (2E)-enoyl-CoA + NADPH + H(+). The protein operates within lipid metabolism; fatty acid biosynthesis. Its function is as follows. Catalyzes the last of the four reactions of the long-chain fatty acids elongation cycle. This endoplasmic reticulum-bound enzymatic process, allows the addition of 2 carbons to the chain of long- and very long-chain fatty acids/VLCFAs per cycle. This enzyme reduces the trans-2,3-enoyl-CoA fatty acid intermediate to an acyl-CoA that can be further elongated by entering a new cycle of elongation. Thereby, it participates in the production of VLCFAs of different chain lengths that are involved in multiple biological processes as precursors of membrane lipids and lipid mediators. The sequence is that of Very-long-chain enoyl-CoA reductase (gpsn2) from Dictyostelium discoideum (Social amoeba).